Reading from the N-terminus, the 464-residue chain is Kynureninase 2 (464 aa).

Residues Leu135, Thr136, 163–166 (FPSD), Asp248, His251, and Tyr273 each bind pyridoxal 5'-phosphate. At Lys274 the chain carries N6-(pyridoxal phosphate)lysine. Trp313 and Asn341 together coordinate pyridoxal 5'-phosphate.

It belongs to the kynureninase family. As to quaternary structure, homodimer. Requires pyridoxal 5'-phosphate as cofactor.

The protein resides in the cytoplasm. The enzyme catalyses L-kynurenine + H2O = anthranilate + L-alanine + H(+). It catalyses the reaction 3-hydroxy-L-kynurenine + H2O = 3-hydroxyanthranilate + L-alanine + H(+). Its pathway is amino-acid degradation; L-kynurenine degradation; L-alanine and anthranilate from L-kynurenine: step 1/1. It participates in cofactor biosynthesis; NAD(+) biosynthesis; quinolinate from L-kynurenine: step 2/3. In terms of biological role, catalyzes the cleavage of L-kynurenine (L-Kyn) and L-3-hydroxykynurenine (L-3OHKyn) into anthranilic acid (AA) and 3-hydroxyanthranilic acid (3-OHAA), respectively. This chain is Kynureninase 2 (bna5-2), found in Aspergillus fumigatus (strain CBS 144.89 / FGSC A1163 / CEA10) (Neosartorya fumigata).